The following is a 359-amino-acid chain: tRNA-specific 2-thiouridylase MnmA (359 aa).

Residues alanine 7–serine 14 and methionine 33 each bind ATP. The active-site Nucleophile is the cysteine 101. Cysteine 101 and cysteine 198 are disulfide-bonded. Position 125 (glycine 125) interacts with ATP. An interaction with tRNA region spans residues lysine 148–glutamine 150. Residue cysteine 198 is the Cysteine persulfide intermediate of the active site.

This sequence belongs to the MnmA/TRMU family.

The protein resides in the cytoplasm. The catalysed reaction is S-sulfanyl-L-cysteinyl-[protein] + uridine(34) in tRNA + AH2 + ATP = 2-thiouridine(34) in tRNA + L-cysteinyl-[protein] + A + AMP + diphosphate + H(+). Catalyzes the 2-thiolation of uridine at the wobble position (U34) of tRNA, leading to the formation of s(2)U34. In Chloroflexus aggregans (strain MD-66 / DSM 9485), this protein is tRNA-specific 2-thiouridylase MnmA.